We begin with the raw amino-acid sequence, 637 residues long: Proton myo-inositol cotransporter (637 aa).

The Cytoplasmic portion of the chain corresponds to 1–65 (MSRKASEDVE…AARRQFQRDE (65 aa)). Serine 6 carries the phosphoserine modification. Residues 16 to 38 (LSSLMGERRRRQPEPGAPGGERS) form a disordered region. A phosphoserine mark is found at serine 44 and serine 47. The helical transmembrane segment at 66–86 (TPAFVYAAAAFSALGGFLFGY) threads the bilayer. Over 87-114 (DTGVVSGAMLLLRRQMRLGAMWQELLVS) the chain is Extracellular. A helical transmembrane segment spans residues 115–135 (GAVGAAAVAALAGGALNGALG). At 136–137 (RR) the chain is on the cytoplasmic side. The chain crosses the membrane as a helical span at residues 138–158 (SAILLASALCTVGSAVLAAAA). The Extracellular portion of the chain corresponds to 159–167 (NKETLLAGR). A helical transmembrane segment spans residues 168–188 (LVVGLGIGIASMTVPVYIAEV). At 189-201 (SPPNLRGRLVTIN) the chain is on the cytoplasmic side. The helical transmembrane segment at 202–222 (TLFITGGQFFASVVDGAFSYL) threads the bilayer. The Extracellular segment spans residues 223 to 228 (QKDGWR). A helical membrane pass occupies residues 229 to 249 (YMLGLAAIPAVIQFLGFLFLP). Residues 250–313 (ESPRWLIQKG…RMLSYPPTRR (64 aa)) lie on the Cytoplasmic side of the membrane. Residues 314-334 (ALAVGCGLQMFQQLSGINTIM) traverse the membrane as a helical segment. At 335-352 (YYSATILQMSGVEDDRLA) the chain is on the extracellular side. The chain crosses the membrane as a helical span at residues 353-373 (IWLASITAFTNFIFTLVGVWL). Over 374–382 (VEKVGRRKL) the chain is Cytoplasmic. Residues 383–403 (TFGSLAGTTVALTILALGFLL) form a helical membrane-spanning segment. Residues 404–497 (SAQVSPRVTF…SFCPTPYSWT (94 aa)) lie on the Extracellular side of the membrane. Residues asparagine 422, asparagine 447, and asparagine 474 are each glycosylated (N-linked (GlcNAc...) asparagine). Residues 498 to 518 (ALVGLVLYLVFFAPGMGPMPW) form a helical membrane-spanning segment. At 519–538 (TVNSEIYPLWARSTGNACSA) the chain is on the cytoplasmic side. The helical transmembrane segment at 539–559 (GINWIFNVLVSLTFLHTAEYL) threads the bilayer. Residues 560 to 562 (TYY) lie on the Extracellular side of the membrane. Residues 563–583 (GAFFLYAGFAAVGLLFVYGCL) traverse the membrane as a helical segment. Residues 584–637 (PETKGKKLEEIESLFDHRLCTCGTADSDEGRYIEYIRVKGSNYHLSDNDASDVE) are Cytoplasmic-facing. A phosphoserine mark is found at serine 629 and serine 634.

Belongs to the major facilitator superfamily. Sugar transporter (TC 2.A.1.1) family.

It is found in the cell membrane. It catalyses the reaction myo-inositol(out) + H(+)(out) = myo-inositol(in) + H(+)(in). Functionally, h(+)-myo-inositol cotransporter. Can also transport related stereoisomers. The polypeptide is Proton myo-inositol cotransporter (Rattus norvegicus (Rat)).